Reading from the N-terminus, the 199-residue chain is dITP/XTP pyrophosphatase (199 aa).

Threonine 7–lysine 12 serves as a coordination point for substrate. Glutamate 37 and aspartate 66 together coordinate Mg(2+). Catalysis depends on aspartate 66, which acts as the Proton acceptor. Substrate contacts are provided by residues serine 67, phenylalanine 146–aspartate 149, lysine 169, and histidine 174–arginine 175.

The protein belongs to the HAM1 NTPase family. Homodimer. Mg(2+) serves as cofactor.

The catalysed reaction is XTP + H2O = XMP + diphosphate + H(+). The enzyme catalyses dITP + H2O = dIMP + diphosphate + H(+). It carries out the reaction ITP + H2O = IMP + diphosphate + H(+). Functionally, pyrophosphatase that catalyzes the hydrolysis of nucleoside triphosphates to their monophosphate derivatives, with a high preference for the non-canonical purine nucleotides XTP (xanthosine triphosphate), dITP (deoxyinosine triphosphate) and ITP. Seems to function as a house-cleaning enzyme that removes non-canonical purine nucleotides from the nucleotide pool, thus preventing their incorporation into DNA/RNA and avoiding chromosomal lesions. The sequence is that of dITP/XTP pyrophosphatase from Deinococcus geothermalis (strain DSM 11300 / CIP 105573 / AG-3a).